Reading from the N-terminus, the 512-residue chain is GMP synthase [glutamine-hydrolyzing] (512 aa).

Residues 7–197 (TIIVLDFGSQ…VFGVCGCSEG (191 aa)) form the Glutamine amidotransferase type-1 domain. The active-site Nucleophile is Cys84. Catalysis depends on residues His171 and Glu173. In terms of domain architecture, GMPS ATP-PPase spans 198 to 387 (WNMENFIEVE…LGIPDEIVWR (190 aa)). 225 to 231 (SGGVDSS) is a binding site for ATP.

In terms of assembly, homodimer.

It catalyses the reaction XMP + L-glutamine + ATP + H2O = GMP + L-glutamate + AMP + diphosphate + 2 H(+). The protein operates within purine metabolism; GMP biosynthesis; GMP from XMP (L-Gln route): step 1/1. Its function is as follows. Catalyzes the synthesis of GMP from XMP. This Bacillus cereus (strain B4264) protein is GMP synthase [glutamine-hydrolyzing].